A 129-amino-acid polypeptide reads, in one-letter code: Calcitonin gene-related peptide 2 (129 aa).

The N-terminal stretch at 1–25 (MGFGKPSSFLAFSILVLCQAGSLQA) is a signal peptide. A propeptide spanning residues 26-81 (QPLRSSLESLPDPAALSEKEGRLLLAALVKAYVQRKTNELEQEQEQEMEGSSLTAQ) is cleaved from the precursor. Cysteines 85 and 90 form a disulfide. Phe-120 is subject to Phenylalanine amide. Positions 126–129 (DLQA) are excised as a propeptide.

Belongs to the calcitonin family.

It is found in the secreted. Its function is as follows. CALCB/CGRP2 is a peptide hormone that induces vasodilation mediated by the CALCRL-RAMP1 receptor complex. Dilates a variety of vessels including the coronary, cerebral and systemic vasculature. Its abundance in the CNS also points toward a neurotransmitter or neuromodulator role. The protein is Calcitonin gene-related peptide 2 (CALCB) of Equus caballus (Horse).